Here is a 309-residue protein sequence, read N- to C-terminus: Methionyl-tRNA formyltransferase (309 aa).

109 to 112 lines the (6S)-5,6,7,8-tetrahydrofolate pocket; it reads SLLP.

It belongs to the Fmt family.

The enzyme catalyses L-methionyl-tRNA(fMet) + (6R)-10-formyltetrahydrofolate = N-formyl-L-methionyl-tRNA(fMet) + (6S)-5,6,7,8-tetrahydrofolate + H(+). Functionally, attaches a formyl group to the free amino group of methionyl-tRNA(fMet). The formyl group appears to play a dual role in the initiator identity of N-formylmethionyl-tRNA by promoting its recognition by IF2 and preventing the misappropriation of this tRNA by the elongation apparatus. The chain is Methionyl-tRNA formyltransferase from Clostridium novyi (strain NT).